The primary structure comprises 558 residues: NXPE family member 2 (558 aa).

A helical transmembrane segment spans residues 17-37 (ASARKLFLIVLIIFVFWVVFM).

The protein belongs to the NXPE family.

Its subcellular location is the membrane. The polypeptide is NXPE family member 2 (Nxpe2) (Mus musculus (Mouse)).